A 61-amino-acid chain; its full sequence is Cecropin-D (61 aa).

The N-terminal stretch at 1 to 22 is a signal peptide; sequence MKFSKIFVFVFAIVFATASVSA. A propeptide spans 23 to 24 (removed by a dipeptidylpeptidase); sequence AP. Q60 carries the post-translational modification Glutamine amide.

This sequence belongs to the cecropin family. Mainly in fat body. Lower in hemocytes. Not expressed in midguts, malpighian tubules and silk glands.

The protein localises to the secreted. Cecropins have lytic and antibacterial activity against several Gram-positive and Gram-negative bacteria. The sequence is that of Cecropin-D (CECD) from Bombyx mori (Silk moth).